Here is a 454-residue protein sequence, read N- to C-terminus: Serine/arginine (SR)-type shuttling mRNA binding protein HRB1 (454 aa).

The segment at 1 to 141 (MSDQERGSEN…SSGARGDYGP (141 aa)) is disordered. Residues 14–24 (SRSRSRSPVRR) are compositionally biased toward basic residues. Composition is skewed to basic and acidic residues over residues 25 to 38 (RMSDDHGYERDNHL) and 50 to 113 (KFAD…DYPR). An Omega-N-methylarginine modification is found at Arg-127. RRM domains follow at residues 161–237 (NSIF…QDNP) and 261–338 (HEVI…SKES). Ser-338, Ser-343, and Ser-355 each carry phosphoserine. The 78-residue stretch at 376-453 (RLIYCSNLPF…CDLDISYAKR (78 aa)) folds into the RRM 3 domain.

In terms of processing, methylated by HMT1.

The protein resides in the cytoplasm. The protein localises to the nucleus. It localises to the P-body. It is found in the stress granule. Functionally, binds to intron-containing transcripts and is involved in quality control for the export of spliced mRNAs from the nucleus. Binds to pre-mRNAs until splicing is completed or until faulty mRNAs are degraded. On correctly spliced mRNAs, GBP2 and HRB1 recruit MEX67 to allow nuclear export. On faulty mRNAs, GBP2 and HRB1 associate with the TRAMP complex that guides those pre-mRNAs to the exosome for degradation. The sequence is that of Serine/arginine (SR)-type shuttling mRNA binding protein HRB1 from Saccharomyces cerevisiae (strain ATCC 204508 / S288c) (Baker's yeast).